The sequence spans 422 residues: Phosphoserine aminotransferase 2, chloroplastic (422 aa).

The transit peptide at 1–50 (MAASTNSFLIGNQTQIPSLKPKSISQSFIHFTKPNTINLTTRTKSVSIRC) directs the protein to the chloroplast. Alanine 51 carries the post-translational modification N-acetylalanine. Residue arginine 101 coordinates L-glutamate. Pyridoxal 5'-phosphate-binding positions include 135–136 (AT), tryptophan 161, threonine 211, aspartate 233, and glutamine 256. Lysine 257 carries the N6-(pyridoxal phosphate)lysine modification. 298 to 299 (NT) contributes to the pyridoxal 5'-phosphate binding site.

This sequence belongs to the class-V pyridoxal-phosphate-dependent aminotransferase family. SerC subfamily. Pyridoxal 5'-phosphate serves as cofactor.

The protein localises to the plastid. It localises to the chloroplast. The enzyme catalyses O-phospho-L-serine + 2-oxoglutarate = 3-phosphooxypyruvate + L-glutamate. It catalyses the reaction 4-(phosphooxy)-L-threonine + 2-oxoglutarate = (R)-3-hydroxy-2-oxo-4-phosphooxybutanoate + L-glutamate. It participates in amino-acid biosynthesis; L-serine biosynthesis; L-serine from 3-phospho-D-glycerate: step 2/3. In terms of biological role, involved in the plastidial phosphorylated pathway of serine biosynthesis (PPSB). Catalyzes the reversible conversion of 3-phosphohydroxypyruvate to phosphoserine. The sequence is that of Phosphoserine aminotransferase 2, chloroplastic (PSAT2) from Arabidopsis thaliana (Mouse-ear cress).